Consider the following 159-residue polypeptide: MADS-box transcription factor 23 (159 aa).

The 61-residue stretch at 1–61 (MGRGKIEIKR…SRLYDFASSS (61 aa)) folds into the MADS-box domain. A K-box domain is found at 86-159 (AKLWQQEAAS…QELSRKVVTT (74 aa)).

As to expression, expressed in seedling roots and developing seeds.

It localises to the nucleus. In terms of biological role, probable transcription factor. This is MADS-box transcription factor 23 (MADS23) from Oryza sativa subsp. japonica (Rice).